Reading from the N-terminus, the 598-residue chain is Torsin-1A-interacting protein 1 (598 aa).

At 1-351 (MAGEGRRAEA…PQNASFVKRN (351 aa)) the chain is on the nuclear side. Disordered stretches follow at residues 19–254 (VTPR…RSSS) and 267–314 (QNFT…IYGS). The residue at position 60 (S60) is a Phosphoserine. Composition is skewed to basic and acidic residues over residues 73 to 101 (LVDK…EVRE) and 115 to 124 (RPQEAEEMKT). Residues S135, S143, S154, S156, S157, and S187 each carry the phosphoserine modification. Residues 205-214 (EATSVQQKVN) show a composition bias toward polar residues. S216 carries the phosphoserine modification. A Phosphothreonine modification is found at T221. A phosphoserine mark is found at S227, S230, and S242. Over residues 238–250 (RSRDSDESGDKTT) the composition is skewed to basic and acidic residues. 2 stretches are compositionally biased toward polar residues: residues 277–287 (SVLSSGYQKTP) and 300–313 (RMQT…SIYG). S320 is modified (phosphoserine). Residues 322–341 (LKSELGNQSPSTSSQQVTGQ) form a disordered region. K323 participates in a covalent cross-link: Glycyl lysine isopeptide (Lys-Gly) (interchain with G-Cter in SUMO2). Positions 326 to 341 (LGNQSPSTSSQQVTGQ) are enriched in polar residues. Position 330 is a phosphoserine (S330). A helical transmembrane segment spans residues 352 to 372 (WWWLLPLIAALASGSFWFFST). An interaction with TOR1A region spans residues 371 to 598 (STPEVETTAV…ENALKRGICL (228 aa)). Topologically, residues 373 to 598 (PEVETTAVQE…ENALKRGICL (226 aa)) are perinuclear space. Positions 374–450 (EVETTAVQEF…SEQIADAYSS (77 aa)) form a coiled coil. N-linked (GlcNAc...) asparagine glycosylation is present at N414.

Belongs to the TOR1AIP family. Interacts with ATP1B4. Interacts with TOR1A (ATP-bound). Interacts with TOR1B, TOR2A and TOR3A.

The protein resides in the nucleus inner membrane. Required for nuclear membrane integrity. Induces TOR1A and TOR1B ATPase activity and is required for their location on the nuclear membrane. Binds to A- and B-type lamins. Possible role in membrane attachment and assembly of the nuclear lamina. In Pongo abelii (Sumatran orangutan), this protein is Torsin-1A-interacting protein 1 (TOR1AIP1).